A 461-amino-acid chain; its full sequence is ATP synthase subunit beta (461 aa).

Position 151 to 158 (151 to 158 (GGAGVGKT)) interacts with ATP.

This sequence belongs to the ATPase alpha/beta chains family. F-type ATPases have 2 components, CF(1) - the catalytic core - and CF(0) - the membrane proton channel. CF(1) has five subunits: alpha(3), beta(3), gamma(1), delta(1), epsilon(1). CF(0) has three main subunits: a(1), b(2) and c(9-12). The alpha and beta chains form an alternating ring which encloses part of the gamma chain. CF(1) is attached to CF(0) by a central stalk formed by the gamma and epsilon chains, while a peripheral stalk is formed by the delta and b chains.

It is found in the cell inner membrane. The catalysed reaction is ATP + H2O + 4 H(+)(in) = ADP + phosphate + 5 H(+)(out). Produces ATP from ADP in the presence of a proton gradient across the membrane. The catalytic sites are hosted primarily by the beta subunits. This chain is ATP synthase subunit beta, found in Colwellia psychrerythraea (strain 34H / ATCC BAA-681) (Vibrio psychroerythus).